The sequence spans 1220 residues: Plasma membrane calcium-transporting ATPase 1 (1220 aa).

Glycine 2 is subject to N-acetylglycine. The Cytoplasmic segment spans residues 2-105 (GDMANNSVAY…KTFLQLVWEA (104 aa)). Phosphoserine occurs at positions 8 and 17. The chain crosses the membrane as a helical span at residues 106-126 (LQDVTLIILEIAAIVSLGLSF). Over 127–154 (YQPPEGDNALCGEVSVGEEEGEGETGWI) the chain is Extracellular. A helical membrane pass occupies residues 155 to 175 (EGAAILLSVVCVVLVTAFNDW). The Cytoplasmic portion of the chain corresponds to 176-366 (SKEKQFRGLQ…KEKSVLQGKL (191 aa)). The tract at residues 297–356 (EEEKKDEKKKEKKNKKQDGAIENRNKAKAQDGAAMEMQPLKSEEGGDGDEKDKKKANLPK) is disordered. Composition is skewed to basic and acidic residues over residues 312-325 (KQDGAIENRNKAKA) and 337-356 (KSEEGGDGDEKDKKKANLPK). Phosphoserine is present on serine 338. Residues 367–386 (TKLAVQIGKAGLLMSAITVI) form a helical membrane-spanning segment. The Extracellular portion of the chain corresponds to 387 to 418 (ILVLYFVIDTFWVQKRPWLAECTPIYIQYFVK). Residues 419 to 439 (FFIIGVTVLVVAVPEGLPLAV) form a helical membrane-spanning segment. The Cytoplasmic portion of the chain corresponds to 440 to 855 (TISLAYSVKK…RNVYDSISKF (416 aa)). The active-site 4-aspartylphosphate intermediate is the aspartate 475. Mg(2+)-binding residues include aspartate 475, threonine 477, and aspartate 797. The helical transmembrane segment at 856 to 876 (LQFQLTVNVVAVIVAFTGACI) threads the bilayer. Topologically, residues 877 to 882 (TQDSPL) are extracellular. The helical transmembrane segment at 883 to 903 (KAVQMLWVNLIMDTLASLALA) threads the bilayer. Topologically, residues 904–927 (TEPPTESLLLRKPYGRNKPLISRT) are cytoplasmic. Residues 928 to 948 (MMKNILGHAFYQLVVVFTLLF) form a helical membrane-spanning segment. At 949–971 (AGEKFFDIDSGRNAPLHAPPSEH) the chain is on the extracellular side. Residues 972–991 (YTIVFNTFVLMQLFNEINAR) traverse the membrane as a helical segment. At 992–1005 (KIHGERNVFEGIFN) the chain is on the cytoplasmic side. The helical transmembrane segment at 1006 to 1027 (NAIFCTIVLGTFVVQIIIVQFG) threads the bilayer. At 1028-1039 (GKPFSCSELSIE) the chain is on the extracellular side. A helical membrane pass occupies residues 1040–1060 (QWLWSIFLGMGTLLWGQLIST). Topologically, residues 1061-1220 (IPTSRLKFLK…SPLHSLETSL (160 aa)) are cytoplasmic. The calmodulin-binding subdomain A stretch occupies residues 1100-1117 (LRRGQILWFRGLNRIQTQ). Residue threonine 1116 is modified to Phosphothreonine; by PKC. Residues 1118–1220 (IRVVNAFRSS…SPLHSLETSL (103 aa)) form a required for basolateral membrane targeting region. A phosphoserine mark is found at serine 1140 and serine 1155. Residues 1162-1220 (IDDTDAEDDAPTKRNSSPPPSPNKNNNAVDSGIHLTIEMNKSATSSSPGSPLHSLETSL) are disordered. Threonine 1165 is subject to Phosphothreonine. Serine 1177 carries the phosphoserine; by PKA modification. Phosphoserine occurs at positions 1178 and 1182. The span at 1200-1220 (MNKSATSSSPGSPLHSLETSL) shows a compositional bias: polar residues.

Belongs to the cation transport ATPase (P-type) (TC 3.A.3) family. Type IIB subfamily. Monomer. Dimer. Oligomer. Calmodulin binding. Interacts with PDZD11. Interacts with SLC35G1 and STIM1. Interacts with YWHAE; interacts with the monomeric and dimeric forms of the YWHAE but prefer the monomer form; this interaction inhibits calcium-transporting ATPase activity. Interacts with NPTN; this interaction stabilizes ATP2B1 and increases ATPase activity; this interaction controls T cell calcium homeostasis following T cell activation. Interacts with EPB41; regulates small intestinal calcium absorption through regulation of membrane expression of ATP2B1. Isoform B is ubiquitously expressed. Isoforms A and E have only been found in brain cortex. Isoform C is found in brain cortex, skeletal muscle and heart muscle. Isoform D has only been found in fetal skeletal muscle. Isoform K has been found in small intestine and liver. Isoform B is expressed in hair cells of inner ear.

Its subcellular location is the cell membrane. The protein localises to the basolateral cell membrane. It is found in the synapse. The protein resides in the presynaptic cell membrane. It localises to the cytoplasmic vesicle. Its subcellular location is the secretory vesicle. The protein localises to the synaptic vesicle membrane. The enzyme catalyses Ca(2+)(in) + ATP + H2O = Ca(2+)(out) + ADP + phosphate + H(+). In terms of biological role, catalyzes the hydrolysis of ATP coupled with the transport of calcium from the cytoplasm to the extracellular space thereby maintaining intracellular calcium homeostasis. Plays a role in blood pressure regulation through regulation of intracellular calcium concentration and nitric oxide production leading to regulation of vascular smooth muscle cells vasoconstriction. Positively regulates bone mineralization through absorption of calcium from the intestine. Plays dual roles in osteoclast differentiation and survival by regulating RANKL-induced calcium oscillations in preosteoclasts and mediating calcium extrusion in mature osteoclasts. Regulates insulin sensitivity through calcium/calmodulin signaling pathway by regulating AKT1 activation and NOS3 activation in endothelial cells. May play a role in synaptic transmission by modulating calcium and proton dynamics at the synaptic vesicles. This chain is Plasma membrane calcium-transporting ATPase 1, found in Rattus norvegicus (Rat).